We begin with the raw amino-acid sequence, 136 residues long: Translation initiation factor 5A (136 aa).

The residue at position 37 (Lys-37) is a Hypusine.

The protein belongs to the eIF-5A family.

It localises to the cytoplasm. Its function is as follows. Functions by promoting the formation of the first peptide bond. The sequence is that of Translation initiation factor 5A (eIF5A) from Thermococcus onnurineus (strain NA1).